A 103-amino-acid chain; its full sequence is Large ribosomal subunit protein bL21 (103 aa).

It belongs to the bacterial ribosomal protein bL21 family. In terms of assembly, part of the 50S ribosomal subunit. Contacts protein L20.

In terms of biological role, this protein binds to 23S rRNA in the presence of protein L20. This Shewanella woodyi (strain ATCC 51908 / MS32) protein is Large ribosomal subunit protein bL21.